A 359-amino-acid polypeptide reads, in one-letter code: Phospho-N-acetylmuramoyl-pentapeptide-transferase (359 aa).

A run of 10 helical transmembrane segments spans residues 3-23, 55-75, 80-100, 117-137, 156-176, 187-207, 231-251, 255-275, 280-300, and 334-354; these read LILI…PALI, VAIL…GMAM, PSAS…VGFI, TAKT…ALQF, IATV…VVSA, LDGL…LITF, LALV…WNAA, IFMG…ISVT, ILAV…VVQI, and FWLL…GEWL.

The protein belongs to the glycosyltransferase 4 family. MraY subfamily. The cofactor is Mg(2+).

It localises to the cell membrane. It catalyses the reaction UDP-N-acetyl-alpha-D-muramoyl-L-alanyl-gamma-D-glutamyl-meso-2,6-diaminopimeloyl-D-alanyl-D-alanine + di-trans,octa-cis-undecaprenyl phosphate = di-trans,octa-cis-undecaprenyl diphospho-N-acetyl-alpha-D-muramoyl-L-alanyl-D-glutamyl-meso-2,6-diaminopimeloyl-D-alanyl-D-alanine + UMP. It participates in cell wall biogenesis; peptidoglycan biosynthesis. Functionally, catalyzes the initial step of the lipid cycle reactions in the biosynthesis of the cell wall peptidoglycan: transfers peptidoglycan precursor phospho-MurNAc-pentapeptide from UDP-MurNAc-pentapeptide onto the lipid carrier undecaprenyl phosphate, yielding undecaprenyl-pyrophosphoryl-MurNAc-pentapeptide, known as lipid I. The protein is Phospho-N-acetylmuramoyl-pentapeptide-transferase of Mycolicibacterium smegmatis (strain ATCC 700084 / mc(2)155) (Mycobacterium smegmatis).